The chain runs to 367 residues: Chorismate synthase (367 aa).

R48 provides a ligand contact to NADP(+). FMN-binding positions include R125–S127, G283, K298–S302, and R324.

It belongs to the chorismate synthase family. As to quaternary structure, homotetramer. Requires FMNH2 as cofactor.

It catalyses the reaction 5-O-(1-carboxyvinyl)-3-phosphoshikimate = chorismate + phosphate. It participates in metabolic intermediate biosynthesis; chorismate biosynthesis; chorismate from D-erythrose 4-phosphate and phosphoenolpyruvate: step 7/7. Functionally, catalyzes the anti-1,4-elimination of the C-3 phosphate and the C-6 proR hydrogen from 5-enolpyruvylshikimate-3-phosphate (EPSP) to yield chorismate, which is the branch point compound that serves as the starting substrate for the three terminal pathways of aromatic amino acid biosynthesis. This reaction introduces a second double bond into the aromatic ring system. The polypeptide is Chorismate synthase (Agathobacter rectalis (strain ATCC 33656 / DSM 3377 / JCM 17463 / KCTC 5835 / VPI 0990) (Eubacterium rectale)).